Reading from the N-terminus, the 208-residue chain is Small ribosomal subunit protein uS4 (208 aa).

In terms of domain architecture, S4 RNA-binding spans Arg-98–Lys-158.

This sequence belongs to the universal ribosomal protein uS4 family. As to quaternary structure, part of the 30S ribosomal subunit. Contacts protein S5. The interaction surface between S4 and S5 is involved in control of translational fidelity.

Functionally, one of the primary rRNA binding proteins, it binds directly to 16S rRNA where it nucleates assembly of the body of the 30S subunit. With S5 and S12 plays an important role in translational accuracy. This Magnetococcus marinus (strain ATCC BAA-1437 / JCM 17883 / MC-1) protein is Small ribosomal subunit protein uS4.